A 393-amino-acid chain; its full sequence is Flap endonuclease 1 (393 aa).

The N-domain stretch occupies residues methionine 1–alanine 108. Residue aspartate 34 participates in Mg(2+) binding. Arginine 74 contacts DNA. Aspartate 90 contributes to the Mg(2+) binding site. Residues serine 99 to glutamate 120 are compositionally biased toward basic and acidic residues. The interval serine 99–methionine 127 is disordered. The segment at alanine 126–tyrosine 257 is I-domain. Mg(2+) contacts are provided by glutamate 162, glutamate 164, aspartate 183, and aspartate 185. Glutamate 162 contributes to the DNA binding site. 2 residues coordinate DNA: glycine 235 and aspartate 237. Aspartate 237 is a Mg(2+) binding site. Residues threonine 340–phenylalanine 348 are interaction with PCNA. Residues asparagine 358–lysine 393 form a disordered region. Residues serine 384–lysine 393 are compositionally biased toward basic residues.

Belongs to the XPG/RAD2 endonuclease family. FEN1 subfamily. In terms of assembly, interacts with PCNA. Three molecules of FEN1 bind to one PCNA trimer with each molecule binding to one PCNA monomer. PCNA stimulates the nuclease activity without altering cleavage specificity. It depends on Mg(2+) as a cofactor. In terms of processing, phosphorylated. Phosphorylation upon DNA damage induces relocalization to the nuclear plasma.

It is found in the nucleus. It localises to the nucleolus. The protein resides in the nucleoplasm. The protein localises to the mitochondrion. Its function is as follows. Structure-specific nuclease with 5'-flap endonuclease and 5'-3' exonuclease activities involved in DNA replication and repair. During DNA replication, cleaves the 5'-overhanging flap structure that is generated by displacement synthesis when DNA polymerase encounters the 5'-end of a downstream Okazaki fragment. It enters the flap from the 5'-end and then tracks to cleave the flap base, leaving a nick for ligation. Also involved in the long patch base excision repair (LP-BER) pathway, by cleaving within the apurinic/apyrimidinic (AP) site-terminated flap. Acts as a genome stabilization factor that prevents flaps from equilibrating into structures that lead to duplications and deletions. Also possesses 5'-3' exonuclease activity on nicked or gapped double-stranded DNA, and exhibits RNase H activity. Also involved in replication and repair of rDNA and in repairing mitochondrial DNA. The chain is Flap endonuclease 1 from Trypanosoma brucei brucei (strain 927/4 GUTat10.1).